Reading from the N-terminus, the 722-residue chain is Formin-like protein 16 (722 aa).

4 disordered regions span residues Met1–Asp56, Ala564–Pro606, Val635–His672, and Pro690–Gln722. The segment covering Pro22–Phe55 has biased composition (pro residues). In terms of domain architecture, FH2 spans Phe182–Gly571. Pro residues-rich tracts occupy residues Ile593–Arg605, Pro638–Met658, and Ala709–Gln722.

It belongs to the formin-like family. Class-II subfamily.

In Arabidopsis thaliana (Mouse-ear cress), this protein is Formin-like protein 16 (FH16).